We begin with the raw amino-acid sequence, 256 residues long: 6-phosphogluconolactonase (256 aa).

The protein belongs to the glucosamine/galactosamine-6-phosphate isomerase family. 6-phosphogluconolactonase subfamily.

It catalyses the reaction 6-phospho-D-glucono-1,5-lactone + H2O = 6-phospho-D-gluconate + H(+). It participates in carbohydrate degradation; pentose phosphate pathway; D-ribulose 5-phosphate from D-glucose 6-phosphate (oxidative stage): step 2/3. Its function is as follows. Hydrolysis of 6-phosphogluconolactone to 6-phosphogluconate. This chain is 6-phosphogluconolactonase (pgl), found in Chlamydia trachomatis serovar D (strain ATCC VR-885 / DSM 19411 / UW-3/Cx).